We begin with the raw amino-acid sequence, 278 residues long: Mediator of RNA polymerase II transcription subunit 4 (278 aa).

The stretch at 57–88 (HARILTLRAQVEALEEQKKSSVTALATLRHEL) forms a coiled coil. Disordered stretches follow at residues 120-181 (VPPT…EEEE) and 240-278 (VEAP…DLDD). Composition is skewed to basic and acidic residues over residues 124 to 142 (YRER…KDDA) and 160 to 172 (DAPK…DNKP). Residues 250 to 268 (AEPVQAQAPRPARPAQPQA) are compositionally biased toward low complexity.

This sequence belongs to the Mediator complex subunit 4 family. Component of the Mediator complex.

The protein resides in the nucleus. Functionally, component of the Mediator complex, a coactivator involved in the regulated transcription of nearly all RNA polymerase II-dependent genes. Mediator functions as a bridge to convey information from gene-specific regulatory proteins to the basal RNA polymerase II transcription machinery. Mediator is recruited to promoters by direct interactions with regulatory proteins and serves as a scaffold for the assembly of a functional preinitiation complex with RNA polymerase II and the general transcription factors. The sequence is that of Mediator of RNA polymerase II transcription subunit 4 (MED4) from Phaeosphaeria nodorum (strain SN15 / ATCC MYA-4574 / FGSC 10173) (Glume blotch fungus).